The primary structure comprises 309 residues: 4-hydroxy-3-methylbut-2-enyl diphosphate reductase (309 aa).

Cys-12 serves as a coordination point for [4Fe-4S] cluster. The (2E)-4-hydroxy-3-methylbut-2-enyl diphosphate site is built by His-41 and His-74. Residues His-41 and His-74 each contribute to the dimethylallyl diphosphate site. Isopentenyl diphosphate contacts are provided by His-41 and His-74. Cys-96 provides a ligand contact to [4Fe-4S] cluster. His-124 provides a ligand contact to (2E)-4-hydroxy-3-methylbut-2-enyl diphosphate. Position 124 (His-124) interacts with dimethylallyl diphosphate. His-124 serves as a coordination point for isopentenyl diphosphate. Glu-126 (proton donor) is an active-site residue. Thr-167 lines the (2E)-4-hydroxy-3-methylbut-2-enyl diphosphate pocket. Position 197 (Cys-197) interacts with [4Fe-4S] cluster. The (2E)-4-hydroxy-3-methylbut-2-enyl diphosphate site is built by Ser-225, Ser-226, Asn-227, and Ser-269. Ser-225, Ser-226, Asn-227, and Ser-269 together coordinate dimethylallyl diphosphate. 4 residues coordinate isopentenyl diphosphate: Ser-225, Ser-226, Asn-227, and Ser-269.

It belongs to the IspH family. It depends on [4Fe-4S] cluster as a cofactor.

It carries out the reaction isopentenyl diphosphate + 2 oxidized [2Fe-2S]-[ferredoxin] + H2O = (2E)-4-hydroxy-3-methylbut-2-enyl diphosphate + 2 reduced [2Fe-2S]-[ferredoxin] + 2 H(+). The catalysed reaction is dimethylallyl diphosphate + 2 oxidized [2Fe-2S]-[ferredoxin] + H2O = (2E)-4-hydroxy-3-methylbut-2-enyl diphosphate + 2 reduced [2Fe-2S]-[ferredoxin] + 2 H(+). It participates in isoprenoid biosynthesis; dimethylallyl diphosphate biosynthesis; dimethylallyl diphosphate from (2E)-4-hydroxy-3-methylbutenyl diphosphate: step 1/1. The protein operates within isoprenoid biosynthesis; isopentenyl diphosphate biosynthesis via DXP pathway; isopentenyl diphosphate from 1-deoxy-D-xylulose 5-phosphate: step 6/6. Its function is as follows. Catalyzes the conversion of 1-hydroxy-2-methyl-2-(E)-butenyl 4-diphosphate (HMBPP) into a mixture of isopentenyl diphosphate (IPP) and dimethylallyl diphosphate (DMAPP). Acts in the terminal step of the DOXP/MEP pathway for isoprenoid precursor biosynthesis. This is 4-hydroxy-3-methylbut-2-enyl diphosphate reductase from Shewanella halifaxensis (strain HAW-EB4).